The sequence spans 671 residues: DNA ligase (671 aa).

Residues 32–36 (DAEYD), 81–82 (SL), and Glu-113 contribute to the NAD(+) site. Catalysis depends on Lys-115, which acts as the N6-AMP-lysine intermediate. Residues Arg-136, Glu-173, Lys-290, and Lys-314 each coordinate NAD(+). Residues Cys-408, Cys-411, Cys-426, and Cys-432 each coordinate Zn(2+). Residues 593 to 671 (EIDSPFAGKT…EAEMIRLLGA (79 aa)) enclose the BRCT domain.

Belongs to the NAD-dependent DNA ligase family. LigA subfamily. Mg(2+) serves as cofactor. Mn(2+) is required as a cofactor.

It catalyses the reaction NAD(+) + (deoxyribonucleotide)n-3'-hydroxyl + 5'-phospho-(deoxyribonucleotide)m = (deoxyribonucleotide)n+m + AMP + beta-nicotinamide D-nucleotide.. Its function is as follows. DNA ligase that catalyzes the formation of phosphodiester linkages between 5'-phosphoryl and 3'-hydroxyl groups in double-stranded DNA using NAD as a coenzyme and as the energy source for the reaction. It is essential for DNA replication and repair of damaged DNA. This chain is DNA ligase, found in Salmonella paratyphi B (strain ATCC BAA-1250 / SPB7).